The following is a 107-amino-acid chain: Small ribosomal subunit protein uS10c (107 aa).

It belongs to the universal ribosomal protein uS10 family. In terms of assembly, part of the 30S ribosomal subunit.

It localises to the plastid. The protein localises to the chloroplast. Its function is as follows. Involved in the binding of tRNA to the ribosomes. This Phaeodactylum tricornutum (strain CCAP 1055/1) protein is Small ribosomal subunit protein uS10c.